A 507-amino-acid polypeptide reads, in one-letter code: Hippocampus abundant transcript-like protein 1 (507 aa).

The segment at methionine 1 to lysine 27 is disordered. At methionine 1–alanine 51 the chain is on the extracellular side. A helical membrane pass occupies residues phenylalanine 52 to leucine 72. Residues histidine 73–asparagine 84 are Cytoplasmic-facing. The helical transmembrane segment at glycine 85–leucine 105 threads the bilayer. Residues serine 106 to proline 113 lie on the Extracellular side of the membrane. Residues phenylalanine 114–tryptophan 134 form a helical membrane-spanning segment. The Cytoplasmic segment spans residues tryptophan 135–tyrosine 136. The chain crosses the membrane as a helical span at residues phenylalanine 137–valine 157. Residues alanine 158–tyrosine 170 lie on the Extracellular side of the membrane. The chain crosses the membrane as a helical span at residues glycine 171–leucine 191. Residues serine 192–serine 198 lie on the Cytoplasmic side of the membrane. A helical transmembrane segment spans residues leucine 199–valine 219. Topologically, residues proline 220–leucine 257 are extracellular. A helical membrane pass occupies residues leucine 258 to phenylalanine 278. Topologically, residues leucine 279–glutamine 283 are cytoplasmic. A helical transmembrane segment spans residues valine 284–isoleucine 304. Residues valine 305–threonine 323 are Extracellular-facing. A helical membrane pass occupies residues valine 324–alanine 344. The Cytoplasmic portion of the chain corresponds to tryptophan 345–methionine 347. The helical transmembrane segment at tryptophan 348–isoleucine 368 threads the bilayer. The Extracellular segment spans residues serine 369 to glycine 389. Residues leucine 390 to leucine 410 form a helical membrane-spanning segment. At serine 411–proline 430 the chain is on the cytoplasmic side. Residues glycine 431–isoleucine 451 traverse the membrane as a helical segment. At proline 452–leucine 507 the chain is on the extracellular side. Positions glycine 459–threonine 473 are enriched in polar residues. Residues glycine 459–isoleucine 483 are disordered. 2 N-linked (GlcNAc...) asparagine glycosylation sites follow: asparagine 464 and asparagine 465.

Belongs to the major facilitator superfamily.

It localises to the membrane. The polypeptide is Hippocampus abundant transcript-like protein 1 (Mus musculus (Mouse)).